The chain runs to 158 residues: Ribosome maturation factor RimP (158 aa).

It belongs to the RimP family.

It localises to the cytoplasm. Required for maturation of 30S ribosomal subunits. In Pseudomonas fluorescens (strain Pf0-1), this protein is Ribosome maturation factor RimP.